A 213-amino-acid polypeptide reads, in one-letter code: MTEPVTQPALVIPQLIVGLGNPEPKYDQTRHNIGFAAVDALARAWNISLAENRKFQGQYGEGTAPGGVKIRLLKPLTYMNRSGQAIQAVTSWYKLSGESVLVIYDDLDLPLGKTRLRLSGSAGGHNGMKSAIAHLSTQNFPRLRIGIGKPKNAVNGDNSETVSHVLGKFSATETQLMSLVLQFVVECVELSLKQGVEKAMNRCNSYTVEAPKS.

Y26 is a binding site for tRNA. Catalysis depends on H31, which acts as the Proton acceptor. Y78, N80, and N126 together coordinate tRNA.

This sequence belongs to the PTH family. In terms of assembly, monomer.

Its subcellular location is the cytoplasm. It catalyses the reaction an N-acyl-L-alpha-aminoacyl-tRNA + H2O = an N-acyl-L-amino acid + a tRNA + H(+). Its function is as follows. Hydrolyzes ribosome-free peptidyl-tRNAs (with 1 or more amino acids incorporated), which drop off the ribosome during protein synthesis, or as a result of ribosome stalling. Functionally, catalyzes the release of premature peptidyl moieties from peptidyl-tRNA molecules trapped in stalled 50S ribosomal subunits, and thus maintains levels of free tRNAs and 50S ribosomes. The chain is Peptidyl-tRNA hydrolase from Trichormus variabilis (strain ATCC 29413 / PCC 7937) (Anabaena variabilis).